The primary structure comprises 701 residues: Polyribonucleotide nucleotidyltransferase (701 aa).

The Mg(2+) site is built by Asp-485 and Asp-491. In terms of domain architecture, KH spans 552–611 (PKIFKTTVDPEKIRDIIGPGGKMINKIIAKTNVKIDIEPDGRIFVAAPDDISGNRAISMI). Residues 621–689 (GQFFLGKVTR…RLGRIALSRK (69 aa)) form the S1 motif domain.

This sequence belongs to the polyribonucleotide nucleotidyltransferase family. Mg(2+) is required as a cofactor.

Its subcellular location is the cytoplasm. The catalysed reaction is RNA(n+1) + phosphate = RNA(n) + a ribonucleoside 5'-diphosphate. Its function is as follows. Involved in mRNA degradation. Catalyzes the phosphorolysis of single-stranded polyribonucleotides processively in the 3'- to 5'-direction. This is Polyribonucleotide nucleotidyltransferase from Caldicellulosiruptor saccharolyticus (strain ATCC 43494 / DSM 8903 / Tp8T 6331).